The chain runs to 450 residues: Phosphoglucosamine mutase (450 aa).

Residue S101 is the Phosphoserine intermediate of the active site. Positions 101, 240, 242, and 244 each coordinate Mg(2+). S101 carries the post-translational modification Phosphoserine.

The protein belongs to the phosphohexose mutase family. Requires Mg(2+) as cofactor. Activated by phosphorylation.

It carries out the reaction alpha-D-glucosamine 1-phosphate = D-glucosamine 6-phosphate. In terms of biological role, catalyzes the conversion of glucosamine-6-phosphate to glucosamine-1-phosphate. The chain is Phosphoglucosamine mutase from Streptococcus gordonii (strain Challis / ATCC 35105 / BCRC 15272 / CH1 / DL1 / V288).